The following is a 143-amino-acid chain: Large ribosomal subunit protein uL15 (143 aa).

The interval 1-45 is disordered; it reads MLLNTVQPGVGAKHAKRRVGRGIGSGLGKTCGRGHKGQKSRAGGF. Gly residues predominate over residues 21-31; it reads RGIGSGLGKTC.

It belongs to the universal ribosomal protein uL15 family. In terms of assembly, part of the 50S ribosomal subunit.

Binds to the 23S rRNA. The polypeptide is Large ribosomal subunit protein uL15 (Chromobacterium violaceum (strain ATCC 12472 / DSM 30191 / JCM 1249 / CCUG 213 / NBRC 12614 / NCIMB 9131 / NCTC 9757 / MK)).